We begin with the raw amino-acid sequence, 831 residues long: Multiphosphoryl transfer protein 1 (831 aa).

In terms of domain architecture, HPr spans 1 to 90; that stretch reads MLTIQFLCPL…EYIQVRFIDS (90 aa). The active-site Pros-phosphohistidine intermediate; for HPr activity is His-15. A Phosphohistidine; by EI modification is found at His-15. Positions 119–650 are PTS EI; sequence GNVLASGVGV…AVKSQLRQLD (532 aa). The active-site Tele-phosphohistidine intermediate; for PTS EI activity is His-298. His-298 carries the phosphohistidine; by autocatalysis modification. Phosphoenolpyruvate-binding residues include Arg-405 and Arg-441. Mg(2+) is bound by residues Glu-540 and Asp-564. Phosphoenolpyruvate-binding positions include 563–564 and Arg-574; that span reads ND. Residue Cys-611 is the Proton donor; for EI activity of the active site. One can recognise a PTS EIIA type-2 domain in the interval 685 to 828; it reads PLLALENIFV…QSILTLLETE (144 aa). The active-site Tele-phosphohistidine intermediate; for PTS EIIA activity is His-747. His-747 carries the phosphohistidine; by HPr modification.

The protein belongs to the PEP-utilizing enzyme family. Mg(2+) serves as cofactor.

Its subcellular location is the cytoplasm. The catalysed reaction is L-histidyl-[protein] + phosphoenolpyruvate = N(pros)-phospho-L-histidyl-[protein] + pyruvate. The enzyme catalyses D-fructose(out) + N(pros)-phospho-L-histidyl-[protein] = D-fructose 1-phosphate(in) + L-histidyl-[protein]. Its function is as follows. Multifunctional protein that includes general (non sugar-specific) and sugar-specific components of the phosphoenolpyruvate-dependent sugar phosphotransferase system (sugar PTS). This major carbohydrate active transport system catalyzes the phosphorylation of incoming sugar substrates concomitantly with their translocation across the cell membrane. The enzyme II FryABC PTS system is involved in fructose transport. This Escherichia coli (strain K12) protein is Multiphosphoryl transfer protein 1 (fryA).